Here is a 131-residue protein sequence, read N- to C-terminus: Peptide methionine sulfoxide reductase MsrB (131 aa).

One can recognise a MsrB domain in the interval 8–130 (LDEWRSMLDP…NSVCIDLRPR (123 aa)). Zn(2+)-binding residues include cysteine 47, cysteine 50, cysteine 96, and cysteine 99. Cysteine 119 acts as the Nucleophile in catalysis.

Belongs to the MsrB Met sulfoxide reductase family. Zn(2+) serves as cofactor.

It carries out the reaction L-methionyl-[protein] + [thioredoxin]-disulfide + H2O = L-methionyl-(R)-S-oxide-[protein] + [thioredoxin]-dithiol. The sequence is that of Peptide methionine sulfoxide reductase MsrB from Pseudomonas putida (strain GB-1).